The chain runs to 78 residues: D-alanyl carrier protein (78 aa).

One can recognise a Carrier domain in the interval 1 to 78 (MDVENTVVEI…KIIAKAKELQ (78 aa)). Ser-36 bears the O-(pantetheine 4'-phosphoryl)serine mark.

It belongs to the DltC family. Post-translationally, 4'-phosphopantetheine is transferred from CoA to a specific serine of apo-DCP.

It localises to the cytoplasm. It participates in cell wall biogenesis; lipoteichoic acid biosynthesis. Functionally, carrier protein involved in the D-alanylation of lipoteichoic acid (LTA). The loading of thioester-linked D-alanine onto DltC is catalyzed by D-alanine--D-alanyl carrier protein ligase DltA. The DltC-carried D-alanyl group is further transferred to cell membrane phosphatidylglycerol (PG) by forming an ester bond, probably catalyzed by DltD. D-alanylation of LTA plays an important role in modulating the properties of the cell wall in Gram-positive bacteria, influencing the net charge of the cell wall. This chain is D-alanyl carrier protein, found in Latilactobacillus sakei subsp. sakei (strain 23K) (Lactobacillus sakei subsp. sakei).